Reading from the N-terminus, the 343-residue chain is MLVTEFDYHLPPELIAQEPLVQRDATRLMTVERDGGGIGEIPFRGIVDLFRPGDLLVINDTRVIPARLLGRKESGGKTEIFLVRRRPGDHETWHCLIRSSKPPRPGVTVLLPEGVRAVVREPGDGETWLVSFTPGEGFQEWLDRNGAMPLPPYIRREADAADRDRYQTVFARNRGAVAAPTAGLHMTAGLLDEIAGRGVRVAPVTLHVGLGTFMPIRVERLEDHRMHRERYHIPPATADAINGCRREGGRVIALGTTVCRTLEQAAAADGTIAAGEGEADIFIYPGYRFKAVDALITNFHLPKSTLLMLVSAFAGRDLLFRAYGEAVARRFRFFSYGDAMFIF.

Belongs to the QueA family. As to quaternary structure, monomer.

The protein localises to the cytoplasm. It carries out the reaction 7-aminomethyl-7-carbaguanosine(34) in tRNA + S-adenosyl-L-methionine = epoxyqueuosine(34) in tRNA + adenine + L-methionine + 2 H(+). It participates in tRNA modification; tRNA-queuosine biosynthesis. In terms of biological role, transfers and isomerizes the ribose moiety from AdoMet to the 7-aminomethyl group of 7-deazaguanine (preQ1-tRNA) to give epoxyqueuosine (oQ-tRNA). The chain is S-adenosylmethionine:tRNA ribosyltransferase-isomerase from Geobacter sulfurreducens (strain ATCC 51573 / DSM 12127 / PCA).